The chain runs to 1572 residues: Multiple epidermal growth factor-like domains protein 6 (1572 aa).

Positions methionine 1 to alanine 26 are cleaved as a signal peptide. Residues methionine 40–serine 121 form the EMI domain. Cystine bridges form between cysteine 44–cysteine 107, cysteine 73–cysteine 79, cysteine 106–cysteine 119, cysteine 126–cysteine 137, cysteine 133–cysteine 146, cysteine 148–cysteine 161, cysteine 167–cysteine 178, cysteine 174–cysteine 187, cysteine 189–cysteine 202, cysteine 291–cysteine 302, cysteine 298–cysteine 311, cysteine 313–cysteine 326, cysteine 418–cysteine 429, cysteine 425–cysteine 438, cysteine 440–cysteine 453, cysteine 522–cysteine 535, cysteine 529–cysteine 542, cysteine 544–cysteine 553, cysteine 566–cysteine 578, cysteine 572–cysteine 585, cysteine 587–cysteine 596, cysteine 609–cysteine 621, cysteine 615–cysteine 628, cysteine 630–cysteine 639, cysteine 788–cysteine 797, cysteine 791–cysteine 804, cysteine 806–cysteine 815, cysteine 832–cysteine 840, cysteine 834–cysteine 847, cysteine 849–cysteine 858, cysteine 871–cysteine 884, cysteine 875–cysteine 891, cysteine 893–cysteine 902, cysteine 915–cysteine 927, cysteine 921–cysteine 934, and cysteine 936–cysteine 945. An EGF-like 1; calcium-binding domain is found at aspartate 122 to glutamine 162. Residues aspartate 163 to leucine 203 form the EGF-like 2; calcium-binding domain. Positions aspartate 287 to tyrosine 327 constitute an EGF-like 3; calcium-binding domain. Positions aspartate 414 to threonine 454 constitute an EGF-like 4; calcium-binding domain. 17 consecutive EGF-like domains span residues phenylalanine 518–asparagine 554, phenylalanine 562–glutamate 597, tyrosine 605–histidine 640, glutamine 785–glutamine 816, glutamine 829–glutamine 859, tryptophan 867–glutamate 903, phenylalanine 911–glutamate 946, phenylalanine 997–leucine 1032, tyrosine 1040–glutamate 1075, histidine 1083–glutamine 1118, glutamate 1131–glutamate 1161, phenylalanine 1169–glutamate 1204, tyrosine 1256–serine 1291, phenylalanine 1299–glutamate 1334, phenylalanine 1342–glutamate 1377, leucine 1390–glutamate 1420, and histidine 1428–glutamate 1463. Asparagine 1000 is a glycosylation site (N-linked (GlcNAc...) asparagine). 30 disulfides stabilise this stretch: cysteine 1001–cysteine 1013, cysteine 1007–cysteine 1020, cysteine 1022–cysteine 1031, cysteine 1044–cysteine 1056, cysteine 1050–cysteine 1063, cysteine 1065–cysteine 1074, cysteine 1087–cysteine 1099, cysteine 1093–cysteine 1106, cysteine 1108–cysteine 1117, cysteine 1134–cysteine 1142, cysteine 1136–cysteine 1149, cysteine 1151–cysteine 1160, cysteine 1173–cysteine 1185, cysteine 1177–cysteine 1192, cysteine 1194–cysteine 1203, cysteine 1260–cysteine 1272, cysteine 1266–cysteine 1279, cysteine 1281–cysteine 1290, cysteine 1303–cysteine 1315, cysteine 1309–cysteine 1322, cysteine 1324–cysteine 1333, cysteine 1346–cysteine 1358, cysteine 1352–cysteine 1365, cysteine 1367–cysteine 1376, cysteine 1393–cysteine 1401, cysteine 1395–cysteine 1408, cysteine 1410–cysteine 1419, cysteine 1432–cysteine 1444, cysteine 1438–cysteine 1451, and cysteine 1453–cysteine 1462.

The protein localises to the secreted. The polypeptide is Multiple epidermal growth factor-like domains protein 6 (Megf6) (Mus musculus (Mouse)).